The primary structure comprises 393 residues: Putative N(4)-(beta-N-acetylglucosaminyl)-L-asparaginase CG1827 (393 aa).

A signal peptide spans 1–23 (MRRHLRASLWILCLATMAFSILA). 2 N-linked (GlcNAc...) asparagine glycosylation sites follow: Asn-49 and Asn-64. Intrachain disulfides connect Cys-97-Cys-102 and Cys-196-Cys-212. Thr-243 serves as the catalytic Nucleophile. Residues 271-274 (RVGD) and 294-297 (TGDG) contribute to the substrate site. Cys-354 and Cys-381 are disulfide-bonded.

Belongs to the Ntn-hydrolase family. In terms of assembly, heterotetramer of two alpha and two beta chains arranged as a dimer of alpha/beta heterodimers. Cleaved into an alpha and beta chain by autocatalysis; this activates the enzyme. The N-terminal residue of the beta subunit is responsible for the nucleophile hydrolase activity.

It catalyses the reaction N(4)-(beta-N-acetyl-D-glucosaminyl)-L-asparagine + H2O = N-acetyl-beta-D-glucosaminylamine + L-aspartate + H(+). In terms of biological role, cleaves the GlcNAc-Asn bond which joins oligosaccharides to the peptide of asparagine-linked glycoproteins. The protein is Putative N(4)-(beta-N-acetylglucosaminyl)-L-asparaginase CG1827 of Drosophila melanogaster (Fruit fly).